The following is a 277-amino-acid chain: Diaminopimelate epimerase (277 aa).

Substrate-binding residues include Asn-13, Gln-46, and Asn-66. The Proton donor role is filled by Cys-75. Substrate-binding positions include 76–77 (GN), Asn-160, Asn-193, and 211–212 (ER). Residue Cys-220 is the Proton acceptor of the active site. 221 to 222 (GS) lines the substrate pocket.

It belongs to the diaminopimelate epimerase family. Homodimer.

Its subcellular location is the cytoplasm. The enzyme catalyses (2S,6S)-2,6-diaminopimelate = meso-2,6-diaminopimelate. Its pathway is amino-acid biosynthesis; L-lysine biosynthesis via DAP pathway; DL-2,6-diaminopimelate from LL-2,6-diaminopimelate: step 1/1. Functionally, catalyzes the stereoinversion of LL-2,6-diaminopimelate (L,L-DAP) to meso-diaminopimelate (meso-DAP), a precursor of L-lysine and an essential component of the bacterial peptidoglycan. The polypeptide is Diaminopimelate epimerase (Legionella pneumophila (strain Paris)).